A 338-amino-acid polypeptide reads, in one-letter code: Holliday junction branch migration complex subunit RuvB (338 aa).

Positions 4 to 184 are large ATPase domain (RuvB-L); the sequence is SDRLVSGKAR…FGISHHLQYY (181 aa). ATP-binding positions include arginine 24, glycine 65, lysine 68, threonine 69, threonine 70, 131-133, arginine 174, tyrosine 184, and arginine 221; that span reads EDY. Threonine 69 is a Mg(2+) binding site. The tract at residues 185 to 255 is small ATPAse domain (RuvB-S); sequence HHDELTQIVM…LADEALELLA (71 aa). Residues 258–338 are head domain (RuvB-H); that stretch reads HLGFDALDRR…NIEVPDGRNS (81 aa). Residues arginine 294, arginine 313, and arginine 318 each contribute to the DNA site.

It belongs to the RuvB family. As to quaternary structure, homohexamer. Forms an RuvA(8)-RuvB(12)-Holliday junction (HJ) complex. HJ DNA is sandwiched between 2 RuvA tetramers; dsDNA enters through RuvA and exits via RuvB. An RuvB hexamer assembles on each DNA strand where it exits the tetramer. Each RuvB hexamer is contacted by two RuvA subunits (via domain III) on 2 adjacent RuvB subunits; this complex drives branch migration. In the full resolvosome a probable DNA-RuvA(4)-RuvB(12)-RuvC(2) complex forms which resolves the HJ.

The protein resides in the cytoplasm. The enzyme catalyses ATP + H2O = ADP + phosphate + H(+). The RuvA-RuvB-RuvC complex processes Holliday junction (HJ) DNA during genetic recombination and DNA repair, while the RuvA-RuvB complex plays an important role in the rescue of blocked DNA replication forks via replication fork reversal (RFR). RuvA specifically binds to HJ cruciform DNA, conferring on it an open structure. The RuvB hexamer acts as an ATP-dependent pump, pulling dsDNA into and through the RuvAB complex. RuvB forms 2 homohexamers on either side of HJ DNA bound by 1 or 2 RuvA tetramers; 4 subunits per hexamer contact DNA at a time. Coordinated motions by a converter formed by DNA-disengaged RuvB subunits stimulates ATP hydrolysis and nucleotide exchange. Immobilization of the converter enables RuvB to convert the ATP-contained energy into a lever motion, pulling 2 nucleotides of DNA out of the RuvA tetramer per ATP hydrolyzed, thus driving DNA branch migration. The RuvB motors rotate together with the DNA substrate, which together with the progressing nucleotide cycle form the mechanistic basis for DNA recombination by continuous HJ branch migration. Branch migration allows RuvC to scan DNA until it finds its consensus sequence, where it cleaves and resolves cruciform DNA. The protein is Holliday junction branch migration complex subunit RuvB of Dichelobacter nodosus (strain VCS1703A).